The chain runs to 231 residues: 2,3-bisphosphoglycerate-dependent phosphoglycerate mutase (231 aa).

Residues 8–15 (RHGESEWN), 21–22 (TG), R60, 87–90 (ERHY), K98, 114–115 (RR), and 183–184 (GN) contribute to the substrate site. H9 functions as the Tele-phosphohistidine intermediate in the catalytic mechanism. Catalysis depends on E87, which acts as the Proton donor/acceptor.

The protein belongs to the phosphoglycerate mutase family. BPG-dependent PGAM subfamily.

It carries out the reaction (2R)-2-phosphoglycerate = (2R)-3-phosphoglycerate. Its pathway is carbohydrate degradation; glycolysis; pyruvate from D-glyceraldehyde 3-phosphate: step 3/5. Its function is as follows. Catalyzes the interconversion of 2-phosphoglycerate and 3-phosphoglycerate. The polypeptide is 2,3-bisphosphoglycerate-dependent phosphoglycerate mutase (Streptococcus equi subsp. zooepidemicus (strain H70)).